The sequence spans 93 residues: YcgL domain-containing protein PSHAb0508 (93 aa).

Positions 1–85 (MLTAVYKSKK…PQENLLSQLR (85 aa)) constitute a YcgL domain.

The protein is YcgL domain-containing protein PSHAb0508 of Pseudoalteromonas translucida (strain TAC 125).